The chain runs to 304 residues: ATP phosphoribosyltransferase (304 aa).

Belongs to the ATP phosphoribosyltransferase family. Long subfamily. Mg(2+) is required as a cofactor.

Its subcellular location is the cytoplasm. The enzyme catalyses 1-(5-phospho-beta-D-ribosyl)-ATP + diphosphate = 5-phospho-alpha-D-ribose 1-diphosphate + ATP. Its pathway is amino-acid biosynthesis; L-histidine biosynthesis; L-histidine from 5-phospho-alpha-D-ribose 1-diphosphate: step 1/9. With respect to regulation, feedback inhibited by histidine. In terms of biological role, catalyzes the condensation of ATP and 5-phosphoribose 1-diphosphate to form N'-(5'-phosphoribosyl)-ATP (PR-ATP). Has a crucial role in the pathway because the rate of histidine biosynthesis seems to be controlled primarily by regulation of HisG enzymatic activity. This Xanthomonas campestris pv. campestris (strain 8004) protein is ATP phosphoribosyltransferase.